The chain runs to 101 residues: Large ribosomal subunit protein eL21 (101 aa).

Basic residues predominate over residues 1–18 (MVKHSKGYRTRSRSLLRK). Positions 1–24 (MVKHSKGYRTRSRSLLRKSPRERG) are disordered.

This sequence belongs to the eukaryotic ribosomal protein eL21 family.

The polypeptide is Large ribosomal subunit protein eL21 (rpl21e) (Saccharolobus solfataricus (strain ATCC 35092 / DSM 1617 / JCM 11322 / P2) (Sulfolobus solfataricus)).